We begin with the raw amino-acid sequence, 224 residues long: Processed variable antigen (224 aa).

17 repeat units span residues 1–6 (ETGESK), 7–12 (ETGESK), 13–18 (ETGESK), 19–24 (ETGESK), 25–30 (ETGESK), 31–36 (ETGESK), 37–42 (ETGESK), 43–48 (ETGESK), 49–54 (ETGESK), 55–60 (ETGESK), 61–66 (ETGESK), 67–72 (ETGESK), 73–78 (ETGESK), 79–84 (ETGESK), 85–90 (ETGESK), 91–96 (ETGESK), and 97–102 (ETGESK). The interval 1-102 (ETGESKETGE…GESKETGESK (102 aa)) is 17 X 6 AA tandem repeats of E-T-G-E-S-K. Positions 1 to 137 (ETGESKETGE…TEESKDREGN (137 aa)) are enriched in basic and acidic residues. The interval 1–224 (ETGESKETGE…KKADNKKKKK (224 aa)) is disordered. Residues 144–153 (ENSENSNVTS) show a composition bias toward low complexity. Composition is skewed to basic and acidic residues over residues 156–173 (EETKKLAEKEENEGEKLG) and 185–217 (EDPKKLTEQEENGTKESSEETKDDKPEENEKKA).

In Plasmodium falciparum, this protein is Processed variable antigen.